Consider the following 417-residue polypeptide: Serine hydroxymethyltransferase 2 (417 aa).

Residues Leu-121 and 125–127 (GHL) each bind (6S)-5,6,7,8-tetrahydrofolate. Lys-230 carries the post-translational modification N6-(pyridoxal phosphate)lysine. 355-357 (SPF) contacts (6S)-5,6,7,8-tetrahydrofolate.

The protein belongs to the SHMT family. Homodimer. It depends on pyridoxal 5'-phosphate as a cofactor.

It localises to the cytoplasm. The catalysed reaction is (6R)-5,10-methylene-5,6,7,8-tetrahydrofolate + glycine + H2O = (6S)-5,6,7,8-tetrahydrofolate + L-serine. It functions in the pathway one-carbon metabolism; tetrahydrofolate interconversion. It participates in amino-acid biosynthesis; glycine biosynthesis; glycine from L-serine: step 1/1. Functionally, catalyzes the reversible interconversion of serine and glycine with tetrahydrofolate (THF) serving as the one-carbon carrier. This reaction serves as the major source of one-carbon groups required for the biosynthesis of purines, thymidylate, methionine, and other important biomolecules. Also exhibits THF-independent aldolase activity toward beta-hydroxyamino acids, producing glycine and aldehydes, via a retro-aldol mechanism. In Pseudomonas fluorescens (strain ATCC BAA-477 / NRRL B-23932 / Pf-5), this protein is Serine hydroxymethyltransferase 2.